A 327-amino-acid chain; its full sequence is Olfactory receptor 9G4 (327 aa).

Residues 1–43 (MIFPSHDSQAFTSVDMEVGNCTILTEFILLGFSADSQWQPILF) lie on the Extracellular side of the membrane. An N-linked (GlcNAc...) asparagine glycan is attached at Asn-20. Residues 44–64 (GVFLMLYLITLSGNMTLVILI) form a helical membrane-spanning segment. The Cytoplasmic portion of the chain corresponds to 65-71 (RTDSHLH). A helical transmembrane segment spans residues 72–92 (TPMYFFIGNLSFLDFWYTSVY). Residues 93–113 (TPKILASCVSEDKRISLAGCG) are Extracellular-facing. A disulfide bridge connects residues Cys-112 and Cys-194. The chain crosses the membrane as a helical span at residues 114–134 (AQLFFSCVVAYTECYLLAAMA). Residues 135–152 (YDRHAAICNPLLYSGTMS) are Cytoplasmic-facing. The helical transmembrane segment at 153–173 (TALCTGLVAGSYIGGFLNAIA) threads the bilayer. The Extracellular segment spans residues 174 to 212 (HTANTFRLHFCGKNIIDHFFCDAPPLVKMSCTNTRVYEK). A helical membrane pass occupies residues 213-233 (VLLGVVGFTVLSSILAILISY). The Cytoplasmic portion of the chain corresponds to 234-252 (VNILLAILRIHSASGRHKA). The chain crosses the membrane as a helical span at residues 253–273 (FSTCASHLISVMLFYGSLLFM). Residues 274–286 (YSRPSSTYSLERD) lie on the Extracellular side of the membrane. Residues 287-307 (KVAALFYTVINPLLNPLIYSL) form a helical membrane-spanning segment. The Cytoplasmic segment spans residues 308-327 (RNKDIKEAFRKATQTIQPQT).

The protein belongs to the G-protein coupled receptor 1 family.

Its subcellular location is the cell membrane. Functionally, odorant receptor. The sequence is that of Olfactory receptor 9G4 (OR9G4) from Homo sapiens (Human).